The sequence spans 184 residues: Tumor necrosis factor alpha-induced protein 8-like protein 2 (184 aa).

The residue at position 3 (serine 3) is a Phosphoserine.

The protein belongs to the TNFAIP8 family. TNFAIP8L2 subfamily. May interact with CASP8; however, such result is unclear since could not reproduce the interaction with CASP8. Interacts with RAC1. In terms of processing, phosphorylated by TAK1/MAP3K7; this phosphorylation triggers association with BTRC and subsequent ubiquitination and degradation. Ubiquitinated in a BTRC-depdent manner; leading to degradation mediated through the proteasome pathway. Expressed in thymus, spleen, lymph node and small intestine, but not in liver, heart, muscle, testis, spinal cord or brain. Up-regulated in the spinal cord of mice with experimental autoimmune encephalomyelitis. Constitutively expressed by macrophages, B and T-lymphocytes at various developmental stages.

The protein localises to the cytoplasm. The protein resides in the nucleus. Its subcellular location is the lysosome. Acts as a negative regulator of innate and adaptive immunity by maintaining immune homeostasis. Plays a regulatory role in the Toll-like signaling pathway by determining the strength of LPS-induced signaling and gene expression. Inhibits TCR-mediated T-cell activation and negatively regulate T-cell function to prevent hyperresponsiveness. Also inhibits autolysosome formation via negatively modulating MTOR activation by interacting with RAC1 and promoting the disassociation of the RAC1-MTOR complex. Plays an essential role in NK-cell biology by acting as a checkpoint and displaying an expression pattern correlating with NK-cell maturation process and by negatively regulating NK-cell maturation and antitumor immunity. Mechanistically, suppresses IL-15-triggered mTOR activity in NK-cells. This chain is Tumor necrosis factor alpha-induced protein 8-like protein 2 (Tnfaip8l2), found in Mus musculus (Mouse).